Consider the following 932-residue polypeptide: Alanine--tRNA ligase (932 aa).

Zn(2+) is bound by residues H623, H627, C726, and H730. Residues 893 to 916 form a disordered region; it reads RVGGGGGGPPDFAQGGGPDVDSLD. Positions 894 to 910 are enriched in gly residues; it reads VGGGGGGPPDFAQGGGP.

This sequence belongs to the class-II aminoacyl-tRNA synthetase family. Zn(2+) is required as a cofactor.

Its subcellular location is the cytoplasm. The catalysed reaction is tRNA(Ala) + L-alanine + ATP = L-alanyl-tRNA(Ala) + AMP + diphosphate. Its function is as follows. Catalyzes the attachment of alanine to tRNA(Ala) in a two-step reaction: alanine is first activated by ATP to form Ala-AMP and then transferred to the acceptor end of tRNA(Ala). Also edits incorrectly charged Ser-tRNA(Ala) and Gly-tRNA(Ala) via its editing domain. In Natronomonas pharaonis (strain ATCC 35678 / DSM 2160 / CIP 103997 / JCM 8858 / NBRC 14720 / NCIMB 2260 / Gabara) (Halobacterium pharaonis), this protein is Alanine--tRNA ligase.